The primary structure comprises 450 residues: 3-phosphoshikimate 1-carboxyvinyltransferase (450 aa).

Positions 1–26 (MSGHGTPIPMTSRRASPLKGEAHVPG) are disordered. The 3-phosphoshikimate site is built by lysine 28, serine 29, and arginine 33. Lysine 28 provides a ligand contact to phosphoenolpyruvate. Residues glycine 101 and arginine 129 each contribute to the phosphoenolpyruvate site. Residues serine 174, glutamine 176, aspartate 327, and lysine 354 each contribute to the 3-phosphoshikimate site. Glutamine 176 is a phosphoenolpyruvate binding site. Catalysis depends on aspartate 327, which acts as the Proton acceptor. Residues arginine 358 and arginine 403 each coordinate phosphoenolpyruvate.

The protein belongs to the EPSP synthase family. As to quaternary structure, monomer.

It is found in the cytoplasm. It carries out the reaction 3-phosphoshikimate + phosphoenolpyruvate = 5-O-(1-carboxyvinyl)-3-phosphoshikimate + phosphate. It participates in metabolic intermediate biosynthesis; chorismate biosynthesis; chorismate from D-erythrose 4-phosphate and phosphoenolpyruvate: step 6/7. Catalyzes the transfer of the enolpyruvyl moiety of phosphoenolpyruvate (PEP) to the 5-hydroxyl of shikimate-3-phosphate (S3P) to produce enolpyruvyl shikimate-3-phosphate and inorganic phosphate. This is 3-phosphoshikimate 1-carboxyvinyltransferase from Ruegeria sp. (strain TM1040) (Silicibacter sp.).